Here is a 218-residue protein sequence, read N- to C-terminus: Small ribosomal subunit protein uS3 (218 aa).

The region spanning 38-106 (IREYISKRLQ…RVHINIVEIK (69 aa)) is the KH type-2 domain.

The protein belongs to the universal ribosomal protein uS3 family. In terms of assembly, part of the 30S ribosomal subunit. Forms a tight complex with proteins S10 and S14.

Binds the lower part of the 30S subunit head. Binds mRNA in the 70S ribosome, positioning it for translation. The protein is Small ribosomal subunit protein uS3 of Geobacillus kaustophilus (strain HTA426).